The following is a 468-amino-acid chain: UDP-N-acetylmuramate--L-alanine ligase (468 aa).

Residue G121–T127 coordinates ATP.

Belongs to the MurCDEF family.

Its subcellular location is the cytoplasm. It carries out the reaction UDP-N-acetyl-alpha-D-muramate + L-alanine + ATP = UDP-N-acetyl-alpha-D-muramoyl-L-alanine + ADP + phosphate + H(+). It participates in cell wall biogenesis; peptidoglycan biosynthesis. Functionally, cell wall formation. This is UDP-N-acetylmuramate--L-alanine ligase from Borreliella burgdorferi (strain ATCC 35210 / DSM 4680 / CIP 102532 / B31) (Borrelia burgdorferi).